Here is a 482-residue protein sequence, read N- to C-terminus: Cilia- and flagella-associated protein 53 (482 aa).

3 coiled-coil regions span residues 9–40, 67–124, and 152–413; these read DARIQKMRELEERLANLKADRKVEQKMVAVAE, ADLN…QALA, and IEER…AKDA. The segment at 462–482 is disordered; it reads VNQTLSSTDPPVWHGRRKFDW.

It belongs to the CFAP53 family.

It localises to the cell projection. Its subcellular location is the cilium. The protein resides in the flagellum. Its function is as follows. May play a role in filopodium movement. This chain is Cilia- and flagella-associated protein 53, found in Chlamydomonas reinhardtii (Chlamydomonas smithii).